The chain runs to 398 residues: Nicotinate phosphoribosyltransferase (398 aa).

Position 221 is a phosphohistidine; by autocatalysis (H221).

This sequence belongs to the NAPRTase family. In terms of processing, transiently phosphorylated on a His residue during the reaction cycle. Phosphorylation strongly increases the affinity for substrates and increases the rate of nicotinate D-ribonucleotide production. Dephosphorylation regenerates the low-affinity form of the enzyme, leading to product release.

The catalysed reaction is nicotinate + 5-phospho-alpha-D-ribose 1-diphosphate + ATP + H2O = nicotinate beta-D-ribonucleotide + ADP + phosphate + diphosphate. It participates in cofactor biosynthesis; NAD(+) biosynthesis; nicotinate D-ribonucleotide from nicotinate: step 1/1. Functionally, catalyzes the synthesis of beta-nicotinate D-ribonucleotide from nicotinate and 5-phospho-D-ribose 1-phosphate at the expense of ATP. This is Nicotinate phosphoribosyltransferase from Buchnera aphidicola subsp. Schizaphis graminum (strain Sg).